The chain runs to 166 residues: Small ribosomal subunit protein uS5 (166 aa).

In terms of domain architecture, S5 DRBM spans 11-74 (LQEKLIAVNR…EKARRNMINV (64 aa)).

This sequence belongs to the universal ribosomal protein uS5 family. As to quaternary structure, part of the 30S ribosomal subunit. Contacts proteins S4 and S8.

In terms of biological role, with S4 and S12 plays an important role in translational accuracy. Functionally, located at the back of the 30S subunit body where it stabilizes the conformation of the head with respect to the body. The sequence is that of Small ribosomal subunit protein uS5 from Actinobacillus pleuropneumoniae serotype 5b (strain L20).